We begin with the raw amino-acid sequence, 526 residues long: Dolichyl pyrophosphate Glc1Man9GlcNAc2 alpha-1,3-glucosyltransferase (526 aa).

11 helical membrane passes run 9–29 (AGGH…CLLI), 108–128 (FSVI…CKCI), 143–163 (FILS…HIHF), 188–208 (GALL…VAPA), 238–258 (VTSL…PFLA), 334–354 (PLAT…CLWF), 361–380 (GFLR…GWHV), 400–422 (AGDA…PLLF), 427–449 (LPIK…KTLF), 461–481 (TVYL…LPFT), and 487–507 (YPFI…TYAW).

It belongs to the ALG6/ALG8 glucosyltransferase family.

The protein localises to the endoplasmic reticulum membrane. The enzyme catalyses an alpha-D-Glc-(1-&gt;3)-alpha-D-Man-(1-&gt;2)-alpha-D-Man-(1-&gt;2)-alpha-D-Man-(1-&gt;3)-[alpha-D-Man-(1-&gt;2)-alpha-D-Man-(1-&gt;3)-[alpha-D-Man-(1-&gt;2)-alpha-D-Man-(1-&gt;6)]-alpha-D-Man-(1-&gt;6)]-beta-D-Man-(1-&gt;4)-beta-D-GlcNAc-(1-&gt;4)-alpha-D-GlcNAc-diphospho-di-trans,poly-cis-dolichol + a di-trans,poly-cis-dolichyl beta-D-glucosyl phosphate = an alpha-D-Glc-(1-&gt;3)-alpha-D-Glc-(1-&gt;3)-alpha-D-Man-(1-&gt;2)-alpha-D-Man-(1-&gt;2)-alpha-D-Man-(1-&gt;3)-[alpha-D-Man-(1-&gt;2)-alpha-D-Man-(1-&gt;3)-[alpha-D-Man-(1-&gt;2)-alpha-D-Man-(1-&gt;6)]-alpha-D-Man-(1-&gt;6)]-beta-D-Man-(1-&gt;4)-beta-D-GlcNAc-(1-&gt;4)-alpha-D-GlcNAc-diphospho-di-trans,poly-cis-dolichol + a di-trans,poly-cis-dolichyl phosphate + H(+). It functions in the pathway protein modification; protein glycosylation. In terms of biological role, dolichyl pyrophosphate Glc1Man9GlcNAc2 alpha-1,3-glucosyltransferase that operates in the biosynthetic pathway of dolichol-linked oligosaccharides, the glycan precursors employed in protein asparagine (N)-glycosylation. The assembly of dolichol-linked oligosaccharides begins on the cytosolic side of the endoplasmic reticulum membrane and finishes in its lumen. The sequential addition of sugars to dolichol pyrophosphate produces dolichol-linked oligosaccharides containing fourteen sugars, including two GlcNAcs, nine mannoses and three glucoses. Once assembled, the oligosaccharide is transferred from the lipid to nascent proteins by oligosaccharyltransferases. In the lumen of the endoplasmic reticulum, adds the second glucose residue from dolichyl phosphate glucose (Dol-P-Glc) onto the lipid-linked oligosaccharide intermediate Glc(1)Man(9)GlcNAc(2)-PP-Dol to produce Glc(2)Man(9)GlcNAc(2)-PP-Dol. Glc(2)Man(9)GlcNAc(2)-PP-Dol is a substrate for ALG10, the following enzyme in the biosynthetic pathway. Required for PKD1/Polycystin-1 maturation and localization to the plasma membrane of the primary cilia. The chain is Dolichyl pyrophosphate Glc1Man9GlcNAc2 alpha-1,3-glucosyltransferase from Mus musculus (Mouse).